Reading from the N-terminus, the 184-residue chain is Probable RNA 2'-phosphotransferase (184 aa).

The protein belongs to the KptA/TPT1 family.

Its function is as follows. Removes the 2'-phosphate from RNA via an intermediate in which the phosphate is ADP-ribosylated by NAD followed by a presumed transesterification to release the RNA and generate ADP-ribose 1''-2''-cyclic phosphate (APPR&gt;P). May function as an ADP-ribosylase. The sequence is that of Probable RNA 2'-phosphotransferase from Escherichia coli O9:H4 (strain HS).